Consider the following 251-residue polypeptide: Triosephosphate isomerase (251 aa).

Asn9 to Lys11 is a substrate binding site. The Electrophile role is filled by His95. Glu167 functions as the Proton acceptor in the catalytic mechanism. Residues Gly173, Ser213, and Gly234–Gly235 contribute to the substrate site.

This sequence belongs to the triosephosphate isomerase family. As to quaternary structure, homodimer.

The protein resides in the cytoplasm. It carries out the reaction D-glyceraldehyde 3-phosphate = dihydroxyacetone phosphate. It functions in the pathway carbohydrate biosynthesis; gluconeogenesis. It participates in carbohydrate degradation; glycolysis; D-glyceraldehyde 3-phosphate from glycerone phosphate: step 1/1. Its function is as follows. Involved in the gluconeogenesis. Catalyzes stereospecifically the conversion of dihydroxyacetone phosphate (DHAP) to D-glyceraldehyde-3-phosphate (G3P). In Fusobacterium nucleatum subsp. nucleatum (strain ATCC 25586 / DSM 15643 / BCRC 10681 / CIP 101130 / JCM 8532 / KCTC 2640 / LMG 13131 / VPI 4355), this protein is Triosephosphate isomerase.